Consider the following 358-residue polypeptide: Vesicular integral-membrane protein VIP36 (358 aa).

A signal peptide spans 1 to 46; that stretch reads MAAEAWLWRWGWGWGQRCPGRPGLPGPGPSPTTFLHLLLLLGPVAA. Residues 47–324 are Lumenal-facing; that stretch reads DITDGNSEHL…FRNGPLTGWR (278 aa). Residues 54–278 form the L-type lectin-like domain; the sequence is EHLKREHSLI…DIISIKLFQL (225 aa). A carbohydrate is bound by residues serine 98 and aspartate 133. Ca(2+) contacts are provided by aspartate 164, tyrosine 166, and asparagine 168. Residue 166-168 coordinates a carbohydrate; the sequence is YPN. A glycan (N-linked (GlcNAc...) asparagine) is linked at asparagine 185. An a carbohydrate-binding site is contributed by histidine 192. Residue aspartate 195 participates in Ca(2+) binding. A disulfide bridge links cysteine 204 with cysteine 241. 262-264 provides a ligand contact to a carbohydrate; it reads GDL. Residues 325-347 traverse the membrane as a helical segment; it reads VFLLLLCALLGVVVCAVVGAVVF. Over 348–358 the chain is Cytoplasmic; sequence QKRQERNKRFY.

Ca(2+) serves as cofactor.

It is found in the golgi apparatus membrane. Functionally, plays a role as an intracellular lectin in the early secretory pathway. Interacts with N-acetyl-D-galactosamine and high-mannose type glycans and may also bind to O-linked glycans. Involved in the transport and sorting of glycoproteins carrying high mannose-type glycans. The sequence is that of Vesicular integral-membrane protein VIP36 (Lman2) from Mus musculus (Mouse).